A 269-amino-acid polypeptide reads, in one-letter code: Phosphatidylglycerol--prolipoprotein diacylglyceryl transferase (269 aa).

3 helical membrane passes run 21–41 (WYGI…VLEG), 54–74 (LLLY…VVFE), and 88–108 (IWDG…VILI). R136 provides a ligand contact to a 1,2-diacyl-sn-glycero-3-phospho-(1'-sn-glycerol). The next 2 membrane-spanning stretches (helical) occupy residues 206-226 (GEVV…IEGM) and 236-256 (LRVS…AIFY).

The protein belongs to the Lgt family.

The protein localises to the cell membrane. The catalysed reaction is L-cysteinyl-[prolipoprotein] + a 1,2-diacyl-sn-glycero-3-phospho-(1'-sn-glycerol) = an S-1,2-diacyl-sn-glyceryl-L-cysteinyl-[prolipoprotein] + sn-glycerol 1-phosphate + H(+). It functions in the pathway protein modification; lipoprotein biosynthesis (diacylglyceryl transfer). Its function is as follows. Catalyzes the transfer of the diacylglyceryl group from phosphatidylglycerol to the sulfhydryl group of the N-terminal cysteine of a prolipoprotein, the first step in the formation of mature lipoproteins. The chain is Phosphatidylglycerol--prolipoprotein diacylglyceryl transferase from Ligilactobacillus salivarius (strain UCC118) (Lactobacillus salivarius).